Here is a 622-residue protein sequence, read N- to C-terminus: MRKQFVFLLPFLSRLYHVVIAGGERLTNGGFSPEINPFTPKASLVRYWNKQIHHQSPGSAFLLSKASPLTAVASATFAKLASENALPDRLPDFCSAANLFCFPDLGPTLEKHSNDVKFSVYDQRNFTNYGTIHPGGADSFKKYSQNGNAVTDSFRRYSRDAAGHEDKFTGYADNSNVVEEKFNSYGTSATGGSGDFKNYQSGVNNPTTRFKAYSDEGNGRAQTFKTYTHEANSGPGQSFTSYGKNGNGAPNEFSSYGVSSNVIGSDFSNYGENGNAANDTFKGYGGDGNVPQNNFKSYGASGNAAVDTFLNYRDNANVGDDSFSSYAKNSNFEKVDFVNYGKSINPGSESFSGYGKGAEGNKIDFKTYTQNSTFKDYTKTGVEFAKYNRSSLGGGKTVNKWVEPGKFFRESMLKEGTLIWMPDIKDKMPKRSFLPRSIVSKLPFSTSKIAEIKRVFHANDNSTMEGIITDAVRECERPPTVSETKRCVGSAEDMIDFATSVLGRSVVLRTTESVAGSKEKVMIGKVNGINGGRVTKSVSCHQSLYPYLLYYCHSVPKVRVYESDLLDPKSKAKINHGIAICHMDTSAWGANHGAFMLLGSRPGQIEVCHWIFENDMNWAIAD.

Positions 1–21 (MRKQFVFLLPFLSRLYHVVIA) are cleaved as a signal peptide. Residues 118 to 121 (FSVY) form an FXXY 1 repeat. Asn125 is a glycosylation site (N-linked (GlcNAc...) asparagine). 11 FXXY repeats span residues 126–129 (FTNY), 140–143 (FKKY), 154–157 (FRRY), 168–171 (FTGY), 182–185 (FNSY), 196–199 (FKNY), 210–213 (FKAY), 224–227 (FKTY), 239–242 (FTSY), 253–256 (FSSY), and 267–270 (FSNY). The N-linked (GlcNAc...) asparagine glycan is linked to Asn278. FXXY repeat units follow at residues 281 to 284 (FKGY), 295 to 298 (FKSY), 309 to 312 (FLNY), 323 to 326 (FSSY), 337 to 340 (FVNY), 351 to 354 (FSGY), and 365 to 368 (FKTY). Asn371 is a glycosylation site (N-linked (GlcNAc...) asparagine). 2 FXXY repeats span residues 374-377 (FKDY) and 384-387 (FAKY). Residues Asn388 and Asn461 are each glycosylated (N-linked (GlcNAc...) asparagine). Residues 407–621 (FFRESMLKEG…FENDMNWAIA (215 aa)) enclose the BURP domain.

Expressed in flowers and stems.

It localises to the secreted. The protein localises to the extracellular space. It is found in the apoplast. Its subcellular location is the cell wall. Functionally, involved in cell size determination. The chain is Polygalacturonase 1 beta-like protein 1 from Arabidopsis thaliana (Mouse-ear cress).